Reading from the N-terminus, the 373-residue chain is WAT1-related protein At4g30420 (373 aa).

The next 10 membrane-spanning stretches (helical) occupy residues 2-22 (AMTM…ATLV), 29-49 (VFIL…LYLS), 55-75 (IAIS…SLIG), 94-114 (MGSA…FLAG), 125-145 (GLAK…MTLL), 173-193 (WLIG…WLIL), 205-225 (LSLS…VTFF), 244-264 (CLYA…WAIA), 270-290 (FSAL…ALFF), and 294-314 (IYTG…TVLW). 2 consecutive EamA domains span residues 9-135 (CYAG…TILC) and 186-313 (CWSF…YTVL).

It belongs to the drug/metabolite transporter (DMT) superfamily. Plant drug/metabolite exporter (P-DME) (TC 2.A.7.4) family.

The protein resides in the membrane. The polypeptide is WAT1-related protein At4g30420 (Arabidopsis thaliana (Mouse-ear cress)).